A 250-amino-acid polypeptide reads, in one-letter code: tRNA (guanine-N(7)-)-methyltransferase (250 aa).

S-adenosyl-L-methionine is bound by residues Glu-86, Glu-111, Asp-138, and Asp-161. Residue Asp-161 is part of the active site. Substrate is bound by residues Lys-165, Asp-197, and 229–232; that span reads TEFE.

The protein belongs to the class I-like SAM-binding methyltransferase superfamily. TrmB family.

The catalysed reaction is guanosine(46) in tRNA + S-adenosyl-L-methionine = N(7)-methylguanosine(46) in tRNA + S-adenosyl-L-homocysteine. Its pathway is tRNA modification; N(7)-methylguanine-tRNA biosynthesis. Functionally, catalyzes the formation of N(7)-methylguanine at position 46 (m7G46) in tRNA. The protein is tRNA (guanine-N(7)-)-methyltransferase of Treponema pallidum (strain Nichols).